Here is a 255-residue protein sequence, read N- to C-terminus: Aliphatic sulfonates import ATP-binding protein SsuB (255 aa).

The ABC transporter domain occupies 12–233; it reads LLLNAVSKHY…RLGSVRLAEL (222 aa). 44 to 51 serves as a coordination point for ATP; that stretch reads GRSGGGKS.

This sequence belongs to the ABC transporter superfamily. Aliphatic sulfonates importer (TC 3.A.1.17.2) family. In terms of assembly, the complex is composed of two ATP-binding proteins (SsuB), two transmembrane proteins (SsuC) and a solute-binding protein (SsuA).

Its subcellular location is the cell inner membrane. It catalyses the reaction ATP + H2O + aliphatic sulfonate-[sulfonate-binding protein]Side 1 = ADP + phosphate + aliphatic sulfonateSide 2 + [sulfonate-binding protein]Side 1.. Part of the ABC transporter complex SsuABC involved in aliphatic sulfonates import. Responsible for energy coupling to the transport system. The chain is Aliphatic sulfonates import ATP-binding protein SsuB from Escherichia coli (strain K12).